A 235-amino-acid chain; its full sequence is Large ribosomal subunit protein uL1 (235 aa).

This sequence belongs to the universal ribosomal protein uL1 family. In terms of assembly, part of the 50S ribosomal subunit.

Functionally, binds directly to 23S rRNA. The L1 stalk is quite mobile in the ribosome, and is involved in E site tRNA release. In terms of biological role, protein L1 is also a translational repressor protein, it controls the translation of the L11 operon by binding to its mRNA. This Methylibium petroleiphilum (strain ATCC BAA-1232 / LMG 22953 / PM1) protein is Large ribosomal subunit protein uL1.